We begin with the raw amino-acid sequence, 131 residues long: MLEVTLPGEGTPPAEGFRTLHSLKRDLERYFRGYPVDFDDVPVRINVSGKPREVLELVREIPYGTVVTYGDIAQKANTHPRVVGVSLARNRVPIIVACHRVVAADGLGGFRWGLEWKRRLLELEGALPSRR.

The active-site Nucleophile; methyl group acceptor is C98.

Belongs to the MGMT family.

The protein resides in the cytoplasm. It carries out the reaction a 6-O-methyl-2'-deoxyguanosine in DNA + L-cysteinyl-[protein] = S-methyl-L-cysteinyl-[protein] + a 2'-deoxyguanosine in DNA. The catalysed reaction is a 4-O-methyl-thymidine in DNA + L-cysteinyl-[protein] = a thymidine in DNA + S-methyl-L-cysteinyl-[protein]. Involved in the cellular defense against the biological effects of O6-methylguanine (O6-MeG) and O4-methylthymine (O4-MeT) in DNA. Repairs the methylated nucleobase in DNA by stoichiometrically transferring the methyl group to a cysteine residue in the enzyme. This is a suicide reaction: the enzyme is irreversibly inactivated. This Methanopyrus kandleri (strain AV19 / DSM 6324 / JCM 9639 / NBRC 100938) protein is Methylated-DNA--protein-cysteine methyltransferase (ogt).